Here is a 368-residue protein sequence, read N- to C-terminus: Trans-enoyl reductase thnE (368 aa).

53 to 56 (VDVK) lines the NADP(+) pocket. A substrate-binding site is contributed by 140 to 147 (LATATAAY). NADP(+) contacts are provided by residues 179–182 (STAT), 202–205 (SPSN), Y220, and 267–268 (VE). 289-293 (VMTVW) lines the substrate pocket. 358–359 (PS) lines the NADP(+) pocket.

The protein belongs to the zinc-containing alcohol dehydrogenase family. In terms of assembly, monomer.

The catalysed reaction is malate + 6 malonyl-CoA + acetyl-CoA + 2 AH2 + 2 S-adenosyl-L-methionine + 5 NADPH + 9 H(+) = trihazone A + 2 A + 2 S-adenosyl-L-homocysteine + 6 CO2 + 5 NADP(+) + 7 CoA + 6 H2O. Its pathway is secondary metabolite biosynthesis. In terms of biological role, trans-enoyl reductase; part of the gene cluster that produces the tetronate natural products trihazones. The PKS-NRPS synthetase thnA with the help of the trans-enoyl reductase thnE are responsible for the synthesis of the carboxylmethyl containing trihazone A. The PKS portion of thnA synthesizes beta-keto-triene chain from one acetyl-CoA and 6 equivalents of malonyl-CoA, in collaboration with thnE, which selectively reduces the enoyl intermediate during the first and fourth iteration of the PKS. The NRPS domain selects and activates malate, of which the alpha-hydroxyl group attacks the completed polyketide acyl-S-ACP chain to form the ester product. Intramolecular Dieckmann cyclization catalyzed by the terminal reductase domain releases the product as trihazone A from the PKS-NPRS. The pathway begins with the formation of trihazone A by the hybrid PKS-NRPS synthetase thnA and the trans-enoyl reductase thnE. Trihazone A is further decarboxylated by the 2-oxoglutarate-dependent dioxygenase thnC to produce trihazone D. The function of the FAD-dependent monooxygenase thnD has still to be identified. In Trichoderma harzianum (Hypocrea lixii), this protein is Trans-enoyl reductase thnE.